The chain runs to 241 residues: Methylthioribulose-1-phosphate dehydratase (241 aa).

A substrate-binding site is contributed by C96. 2 residues coordinate Zn(2+): H114 and H116. The Proton donor/acceptor role is filled by E138. Residue H194 coordinates Zn(2+).

It belongs to the aldolase class II family. MtnB subfamily. In terms of assembly, homotetramer. Interacts with APAF1. May interact with CASP1. Requires Zn(2+) as cofactor. Expressed in skeletal muscle (at protein level).

The protein localises to the cytoplasm. It carries out the reaction 5-(methylsulfanyl)-D-ribulose 1-phosphate = 5-methylsulfanyl-2,3-dioxopentyl phosphate + H2O. It functions in the pathway amino-acid biosynthesis; L-methionine biosynthesis via salvage pathway; L-methionine from S-methyl-5-thio-alpha-D-ribose 1-phosphate: step 2/6. Its function is as follows. Catalyzes the dehydration of methylthioribulose-1-phosphate (MTRu-1-P) into 2,3-diketo-5-methylthiopentyl-1-phosphate (DK-MTP-1-P). Functions in the methionine salvage pathway, which plays a key role in cancer, apoptosis, microbial proliferation and inflammation. May inhibit the CASP1-related inflammatory response (pyroptosis), the CASP9-dependent apoptotic pathway and the cytochrome c-dependent and APAF1-mediated cell death. The chain is Methylthioribulose-1-phosphate dehydratase from Mus musculus (Mouse).